We begin with the raw amino-acid sequence, 445 residues long: Phosphoglucosamine mutase (445 aa).

S102 serves as the catalytic Phosphoserine intermediate. The Mg(2+) site is built by S102, D241, D243, and D245. S102 carries the post-translational modification Phosphoserine.

This sequence belongs to the phosphohexose mutase family. It depends on Mg(2+) as a cofactor. Activated by phosphorylation.

It carries out the reaction alpha-D-glucosamine 1-phosphate = D-glucosamine 6-phosphate. Its function is as follows. Catalyzes the conversion of glucosamine-6-phosphate to glucosamine-1-phosphate. In Rhodococcus erythropolis (strain PR4 / NBRC 100887), this protein is Phosphoglucosamine mutase.